The sequence spans 308 residues: Pantothenate kinase (308 aa).

93 to 100 (GSVAVGKS) contacts ATP.

It belongs to the prokaryotic pantothenate kinase family.

The protein resides in the cytoplasm. It carries out the reaction (R)-pantothenate + ATP = (R)-4'-phosphopantothenate + ADP + H(+). It functions in the pathway cofactor biosynthesis; coenzyme A biosynthesis; CoA from (R)-pantothenate: step 1/5. The sequence is that of Pantothenate kinase from Corynebacterium aurimucosum (strain ATCC 700975 / DSM 44827 / CIP 107346 / CN-1) (Corynebacterium nigricans).